The chain runs to 463 residues: Glutamyl-tRNA(Gln) amidotransferase subunit A, mitochondrial (463 aa).

Catalysis depends on charge relay system residues Lys47 and Ser124. Ser148 acts as the Acyl-ester intermediate in catalysis.

Belongs to the amidase family. GatA subfamily. As to quaternary structure, subunit of the heterotrimeric GatFAB amidotransferase (AdT) complex, composed of A, B and F subunits.

The protein localises to the mitochondrion. It carries out the reaction L-glutamyl-tRNA(Gln) + L-glutamine + ATP + H2O = L-glutaminyl-tRNA(Gln) + L-glutamate + ADP + phosphate + H(+). Its function is as follows. Allows the formation of correctly charged Gln-tRNA(Gln) through the transamidation of misacylated Glu-tRNA(Gln) in the mitochondria. The reaction takes place in the presence of glutamine and ATP through an activated gamma-phospho-Glu-tRNA(Gln). The polypeptide is Glutamyl-tRNA(Gln) amidotransferase subunit A, mitochondrial (Eremothecium gossypii (strain ATCC 10895 / CBS 109.51 / FGSC 9923 / NRRL Y-1056) (Yeast)).